Consider the following 245-residue polypeptide: NAD(P)H-quinone oxidoreductase subunit K (245 aa).

4 residues coordinate [4Fe-4S] cluster: Cys-58, Cys-59, Cys-123, and Cys-154. The tract at residues 210-245 (SDTRSAPPKELAEAIGMPIPPALLTEKAQKEEQTRG) is disordered. A compositionally biased stretch (basic and acidic residues) spans 236-245 (KAQKEEQTRG).

The protein belongs to the complex I 20 kDa subunit family. As to quaternary structure, NDH-1 can be composed of about 15 different subunits; different subcomplexes with different compositions have been identified which probably have different functions. Requires [4Fe-4S] cluster as cofactor.

It is found in the cellular thylakoid membrane. The enzyme catalyses a plastoquinone + NADH + (n+1) H(+)(in) = a plastoquinol + NAD(+) + n H(+)(out). It catalyses the reaction a plastoquinone + NADPH + (n+1) H(+)(in) = a plastoquinol + NADP(+) + n H(+)(out). NDH-1 shuttles electrons from an unknown electron donor, via FMN and iron-sulfur (Fe-S) centers, to quinones in the respiratory and/or the photosynthetic chain. The immediate electron acceptor for the enzyme in this species is believed to be plastoquinone. Couples the redox reaction to proton translocation, and thus conserves the redox energy in a proton gradient. Cyanobacterial NDH-1 also plays a role in inorganic carbon-concentration. The chain is NAD(P)H-quinone oxidoreductase subunit K from Nostoc punctiforme (strain ATCC 29133 / PCC 73102).